The sequence spans 347 residues: Protein RecA (347 aa).

64–71 contributes to the ATP binding site; the sequence is GPESSGKT.

Belongs to the RecA family.

Its subcellular location is the cytoplasm. Functionally, can catalyze the hydrolysis of ATP in the presence of single-stranded DNA, the ATP-dependent uptake of single-stranded DNA by duplex DNA, and the ATP-dependent hybridization of homologous single-stranded DNAs. It interacts with LexA causing its activation and leading to its autocatalytic cleavage. The sequence is that of Protein RecA from Bacillus velezensis (strain DSM 23117 / BGSC 10A6 / LMG 26770 / FZB42) (Bacillus amyloliquefaciens subsp. plantarum).